A 1062-amino-acid polypeptide reads, in one-letter code: Carbamoyl phosphate synthase large chain (1062 aa).

The segment at 1–401 (MPKRTDIHKI…AMQKAVRSLE (401 aa)) is carboxyphosphate synthetic domain. Residues arginine 129, arginine 169, glycine 175, glycine 176, lysine 208, isoleucine 210, glutamate 215, glycine 241, isoleucine 242, histidine 243, glutamine 284, and glutamate 298 each contribute to the ATP site. The ATP-grasp 1 domain maps to 133–327 (KELCKELGEP…IAKMAAKIAI (195 aa)). The Mg(2+) site is built by glutamine 284, glutamate 298, and asparagine 300. Positions 284, 298, and 300 each coordinate Mn(2+). Residues 402–546 (IDEKDLYSET…YSTYDGENES (145 aa)) form an oligomerization domain region. Residues 547–929 (HKSGKKSVIV…ALYKAFAGAK (383 aa)) form a carbamoyl phosphate synthetic domain region. In terms of domain architecture, ATP-grasp 2 spans 671–861 (DQIIKKLKLN…MAQVATRVIM (191 aa)). ATP is bound by residues arginine 707, aspartate 746, leucine 748, glutamate 752, glycine 777, valine 778, histidine 779, serine 780, glutamine 820, and glutamate 832. Mg(2+) contacts are provided by glutamine 820, glutamate 832, and asparagine 834. Residues glutamine 820, glutamate 832, and asparagine 834 each coordinate Mn(2+). The 133-residue stretch at 930–1062 (MQLPENGNVL…NRSFATDALK (133 aa)) folds into the MGS-like domain. Residues 930 to 1062 (MQLPENGNVL…NRSFATDALK (133 aa)) are allosteric domain.

Belongs to the CarB family. In terms of assembly, composed of two chains; the small (or glutamine) chain promotes the hydrolysis of glutamine to ammonia, which is used by the large (or ammonia) chain to synthesize carbamoyl phosphate. Tetramer of heterodimers (alpha,beta)4. Requires Mg(2+) as cofactor. Mn(2+) is required as a cofactor.

It catalyses the reaction hydrogencarbonate + L-glutamine + 2 ATP + H2O = carbamoyl phosphate + L-glutamate + 2 ADP + phosphate + 2 H(+). The enzyme catalyses hydrogencarbonate + NH4(+) + 2 ATP = carbamoyl phosphate + 2 ADP + phosphate + 2 H(+). It functions in the pathway amino-acid biosynthesis; L-arginine biosynthesis; carbamoyl phosphate from bicarbonate: step 1/1. The protein operates within pyrimidine metabolism; UMP biosynthesis via de novo pathway; (S)-dihydroorotate from bicarbonate: step 1/3. In terms of biological role, large subunit of the glutamine-dependent carbamoyl phosphate synthetase (CPSase). CPSase catalyzes the formation of carbamoyl phosphate from the ammonia moiety of glutamine, carbonate, and phosphate donated by ATP, constituting the first step of 2 biosynthetic pathways, one leading to arginine and/or urea and the other to pyrimidine nucleotides. The large subunit (synthetase) binds the substrates ammonia (free or transferred from glutamine from the small subunit), hydrogencarbonate and ATP and carries out an ATP-coupled ligase reaction, activating hydrogencarbonate by forming carboxy phosphate which reacts with ammonia to form carbamoyl phosphate. The sequence is that of Carbamoyl phosphate synthase large chain from Lactobacillus johnsonii (strain CNCM I-12250 / La1 / NCC 533).